The following is a 969-amino-acid chain: Aspartic protease 5 (969 aa).

The N-terminal stretch at 1–22 (MEAGAMGGSSFLSFSSGPSAET) is a signal peptide. The span at 1 to 45 (MEAGAMGGSSFLSFSSGPSAETSPSSLSPPTSSSPSPSPQLVSDS) shows a compositional bias: low complexity. 5 disordered regions span residues 1 to 65 (MEAG…SSRT), 79 to 104 (ENEAAPTISQEERRGGSMTAASAGHL), 128 to 149 (SSATSVLSLGGERGRPPSRSSS), 173 to 193 (SSSSPLSPLPHPRGAPASACG), and 311 to 382 (FLSL…DLPR). Residues 23–820 (SPSSLSPPTS…PEGLPLSPQQ (798 aa)) lie on the Lumenal side of the membrane. Over residues 311–324 (FLSLSSSPRSLASD) the composition is skewed to low complexity. Residues 335–355 (QSREQRGEREGERQRPDKGEE) are compositionally biased toward basic and acidic residues. Positions 413–758 (YFLDILVGTP…DREQDRVGFA (346 aa)) constitute a Peptidase A1 domain. Residue aspartate 431 is part of the active site. The disordered stretch occupies residues 608-635 (PPESESTPATEALRPVAGESASRRISEK). Residue aspartate 682 is part of the active site. A disordered region spans residues 768-794 (DQRPRGPDSGDGPKGRPTAPFTVPPLR). The span at 769-781 (QRPRGPDSGDGPK) shows a compositional bias: basic and acidic residues. A helical membrane pass occupies residues 821-841 (LWVAAALVVVAILIAVTVILL). The Cytoplasmic segment spans residues 842–969 (HTIKRPSRSS…TLLDLPLGGE (128 aa)). The interval 922-969 (EDDGDFFGDDSVPSAEEQETAPSLSLREESSPFSASQSTLLDLPLGGE) is disordered. Over residues 952–961 (SPFSASQSTL) the composition is skewed to polar residues.

Belongs to the peptidase A1 family. Post-translationally, may be auto-cleaved to produce a 55 kDa form.

It is found in the golgi apparatus membrane. In terms of biological role, in tachyzoites, plays an essential role in the export of several dense granule proteins into the host cell by cleaving the localization motif RRLxx (termed Toxoplasma export element (TEXEL)) located downstream of the N-terminal secretory signal sequence. However, can also regulate the export of proteins that lack the TEXEL motif, such as GRA24. Requires Arg at P3 and P2, and Leu at P1 in the substrate TEXEL motif and, specifically, cleaves after Leu. Cleaves GRA16; proteolytic cleavage is essential for the correct trafficking of GRA16 from the parasite into the infected host nucleus. Cleaves GRA19 and GRA20. Cleaves MYR1. Cleaves LCAT, GRA44, GRA46, GRA46, ROP35/WNG1 and ROP34/WNG2. By regulating the export of dense granule proteins into the host cell, regulates multiple processes during tachyzoite infection of host cells, including recruitment of host mitochondria to the parasitophorous vacuole (PV), formation of the nanotubular network (NTN) or intravacuolar network (IVN) which are membranous tubules that bud from the PV membrane into the vacuolar lumen and, up-regulation of host cell genes to facilitate the parasite infection and modulate the host innate immune response. At the bradyzoite stage, also involved in the formation of the cyst wall. This Toxoplasma gondii protein is Aspartic protease 5.